Here is a 331-residue protein sequence, read N- to C-terminus: Proton-translocating ferredoxin:NAD(+) oxidoreductase complex subunit D (331 aa).

3 consecutive transmembrane segments (helical) span residues 23 to 43 (ESVS…AVFG), 44 to 64 (VFNF…AAVV), and 84 to 106 (AFLT…MVAI). At Thr-163 the chain carries FMN phosphoryl threonine. 4 consecutive transmembrane segments (helical) span residues 196-216 (NGSI…YLIY), 226-246 (VVMI…TGIF), 251-271 (VFHM…TDMV), and 273-293 (IPMT…LTSL).

Belongs to the NqrB/RnfD family. The complex is composed of six subunits: RnfA, RnfB, RnfC, RnfD, RnfE and RnfG. The cofactor is FMN.

It localises to the cell membrane. In terms of biological role, part of a membrane-bound complex that couples electron transfer with translocation of ions across the membrane. Couples electron transfer from reduced ferredoxin to NAD(+) with translocation of H(+) out of the cell. Essential for energy conservation during autotrophic growth. Contributes to ATP synthesis during heterotrophic growth. This chain is Proton-translocating ferredoxin:NAD(+) oxidoreductase complex subunit D, found in Clostridium ljungdahlii (strain ATCC 55383 / DSM 13528 / PETC).